The chain runs to 240 residues: Terpene cyclase cdmG (240 aa).

The next 6 helical transmembrane spans lie at 16–36 (YASI…LNYG), 48–68 (YGMA…YTVI), 78–98 (IIMT…IKFA), 112–132 (IPFI…ALAA), 134–154 (VGPG…LTIG), and 167–187 (GVSY…VICV). Residue Asn-197 is glycosylated (N-linked (GlcNAc...) asparagine). A helical membrane pass occupies residues 205–225 (IMKCFSGISLAVEIVYGVTLW).

Belongs to the paxB family.

The protein resides in the membrane. The enzyme catalyses verruculide C epoxide = 3-hydroxypentacecilide A. The protein operates within secondary metabolite biosynthesis; terpenoid biosynthesis. In terms of biological role, terpene cyclase; part of the gene cluster that mediates the biosynthesis of chrodrimanin B, a meroterpenoid that acts as a potent blocker of insect GABA-gated chloride channels. The first step of the pathway is the biosynthesis of 6-hydroxymellein by the polyketide synthase cdmE. The prenyltransferase cdmH acts as a 6-hydroxymellein 5-farnesyltransferase and produces the hydrophobic metabolite verruculide C. The FAD-dependent monooxygenase cdmI further converts verruculide C into verruculide B. The terpene cyclase cdmG then produced the pentacyclic molecule 3-hydroxypentacecilide A, the backbone structure of chrodrimanin B, via folding the farnesyl moiety of the substrate into the chair-boat conformation. The short-chain dehydrogenase/reductase cdmF functions as the 3-OH dehydrogenase that oxidizes the C-3 hydroxyl group of 3-hydroxypentacecilide A and produces chrodrimanin C, the dehydrogenated product of 3-hydroxypentacecilide A. The cytochrome P450 monooxygenase cdmJ then accepts both 3-hydroxypentacecilide A and chrodrimanin C and functions as a C-7-beta-hydroxylase to produce respectively chrodrimanin H and chrodrimanin F. The dioxygenase cdmA accepts chrodrimanin H to afford chrodrimanin E, which is further transformed to chrodrimanin A by the dioxygenase cdmD. CdmA can also accept chrodrimanin C as substrate to convert it into verruculide A, which is further converted into chrodrimanin T by cdmD. The last step of the biosynthesis is proposed to be performed by the acetyltransferase cdmC which acetylates chrodrimanin A to yield chrodrimanin B. The pathway may also lead to the production of additional shunt products, including chrodrimanins T and U. The polypeptide is Terpene cyclase cdmG (Talaromyces verruculosus (Penicillium verruculosum)).